A 120-amino-acid chain; its full sequence is Small ribosomal subunit protein uS13 (120 aa).

A disordered region spans residues Pro-96–Lys-120.

This sequence belongs to the universal ribosomal protein uS13 family. As to quaternary structure, part of the 30S ribosomal subunit. Forms a loose heterodimer with protein S19. Forms two bridges to the 50S subunit in the 70S ribosome.

Located at the top of the head of the 30S subunit, it contacts several helices of the 16S rRNA. In the 70S ribosome it contacts the 23S rRNA (bridge B1a) and protein L5 of the 50S subunit (bridge B1b), connecting the 2 subunits; these bridges are implicated in subunit movement. Contacts the tRNAs in the A and P-sites. The polypeptide is Small ribosomal subunit protein uS13 (Chromobacterium violaceum (strain ATCC 12472 / DSM 30191 / JCM 1249 / CCUG 213 / NBRC 12614 / NCIMB 9131 / NCTC 9757 / MK)).